A 42-amino-acid polypeptide reads, in one-letter code: MALILYAIFYLFLVLLNFFHSFKQESNKLELSQWKKGERGKC.

Belongs to the ycf70 family.

It localises to the plastid. The protein resides in the chloroplast. This is an uncharacterized protein from Triticum aestivum (Wheat).